We begin with the raw amino-acid sequence, 298 residues long: MAVILDGKQVAHFLRQSLAEQVQTLAKEGKPIPHLAIVLVGDDPASHTYVYNKVKACQEVGFQTTFIQEASHVQESTLLYLIHKLNEDTSIHGIIIQLPLPKHINAIKIIQAITPSKDVDGLHTFNYGRMACNLPTHIPATPLGILLLLEHYQIETAGKHCVIIGRGPTVGAPLSILMSRNAYPGNATVTLCHSYTQQLTNFTRQADILVVAVGKPGLITADMIKPSTTVIDVGITRIPDTTKKRGYRLKGDVAFEEVATLCNAITPVPGGVGPMTIAALLTNTLRAATNQVYNTPTS.

NADP(+) contacts are provided by residues 165–167 (GRG), Ser-194, and Ile-235.

It belongs to the tetrahydrofolate dehydrogenase/cyclohydrolase family. In terms of assembly, homodimer.

It carries out the reaction (6R)-5,10-methylene-5,6,7,8-tetrahydrofolate + NADP(+) = (6R)-5,10-methenyltetrahydrofolate + NADPH. The enzyme catalyses (6R)-5,10-methenyltetrahydrofolate + H2O = (6R)-10-formyltetrahydrofolate + H(+). It participates in one-carbon metabolism; tetrahydrofolate interconversion. In terms of biological role, catalyzes the oxidation of 5,10-methylenetetrahydrofolate to 5,10-methenyltetrahydrofolate and then the hydrolysis of 5,10-methenyltetrahydrofolate to 10-formyltetrahydrofolate. The chain is Bifunctional protein FolD from Amoebophilus asiaticus (strain 5a2).